A 268-amino-acid polypeptide reads, in one-letter code: Small ribosomal subunit protein uS3 (268 aa).

Positions 40 to 110 (IRNLFFINYR…KLDLTINEIG (71 aa)) constitute a KH type-2 domain.

It belongs to the universal ribosomal protein uS3 family. In terms of assembly, part of the 30S ribosomal subunit. Forms a tight complex with proteins S10 and S14.

In terms of biological role, binds the lower part of the 30S subunit head. Binds mRNA in the 70S ribosome, positioning it for translation. This is Small ribosomal subunit protein uS3 from Mycoplasma genitalium (strain ATCC 33530 / DSM 19775 / NCTC 10195 / G37) (Mycoplasmoides genitalium).